The primary structure comprises 57 residues: Large ribosomal subunit protein bL32 (57 aa).

The disordered stretch occupies residues 1–25 (MATPSNKNSKSHKRNRRGHIGLNVP). Positions 9 to 19 (SKSHKRNRRGH) are enriched in basic residues.

Belongs to the bacterial ribosomal protein bL32 family.

The protein is Large ribosomal subunit protein bL32 of Leuconostoc mesenteroides subsp. mesenteroides (strain ATCC 8293 / DSM 20343 / BCRC 11652 / CCM 1803 / JCM 6124 / NCDO 523 / NBRC 100496 / NCIMB 8023 / NCTC 12954 / NRRL B-1118 / 37Y).